A 248-amino-acid polypeptide reads, in one-letter code: Protein PARTING DANCERS homolog (248 aa).

The segment covering 1–10 (MERSTHSTGW) has biased composition (polar residues). The interval 1–25 (MERSTHSTGWTCLPPPPPEPAAPGR) is disordered.

This sequence belongs to the ERCC1/RAD10/SWI10 family. In terms of assembly, interacts with SHOC1 (via C-terminus). Interacts with HEI10. Highly expressed in anthers and pistil during meiosis. Expressed in pollen mother cells (PMCs) during meiosis. Expressed at low levels in roots, shoots, leaves, flowers, and glumes.

The protein localises to the chromosome. Its subcellular location is the nucleus. It is found in the cytoplasm. It localises to the cell membrane. Functionally, essential for normal crossover (CO) formation during meiosis. Essential component for the formation of class I meiotic COs. Interacts with SHOC1, another meiotic component, to regulate CO formation, possibly by stabilizing the recombination intermediates during meiosis. PTD and SHOC1 may form transient heterotrimeric or heterotetrameric complexes with HEI10 and/or ZIP4 to promote class I COs formation. Does not seem to be involved in early meiotic recombination steps involving double-strand break (DSB) formation, processing, and single-strand invasion. Does not seem to be involved in homologous pairing or synaptonemal complex (SC) assembly. The chain is Protein PARTING DANCERS homolog from Oryza sativa subsp. japonica (Rice).